We begin with the raw amino-acid sequence, 151 residues long: UPF0178 protein CJA_1978 (151 aa).

This sequence belongs to the UPF0178 family.

This is UPF0178 protein CJA_1978 from Cellvibrio japonicus (strain Ueda107) (Pseudomonas fluorescens subsp. cellulosa).